The chain runs to 203 residues: Superoxide dismutase [Mn/Fe] (203 aa).

Residues His-27, His-81, Asp-163, and His-167 each contribute to the Fe(3+) site. Residues His-27, His-81, Asp-163, and His-167 each contribute to the Mn(2+) site.

This sequence belongs to the iron/manganese superoxide dismutase family. Mn(2+) is required as a cofactor. Requires Fe(3+) as cofactor.

The catalysed reaction is 2 superoxide + 2 H(+) = H2O2 + O2. Its function is as follows. Destroys superoxide anion radicals which are normally produced within the cells and which are toxic to biological systems. Catalyzes the dismutation of superoxide anion radicals into O2 and H2O2 by successive reduction and oxidation of the transition metal ion at the active site. This is Superoxide dismutase [Mn/Fe] (sodA) from Streptococcus mutans serotype c (strain ATCC 700610 / UA159).